The following is a 256-amino-acid chain: 5'-nucleotidase SurE (256 aa).

Residues Asp8, Asp9, Ser40, and Asn94 each contribute to the a divalent metal cation site.

Belongs to the SurE nucleotidase family. A divalent metal cation is required as a cofactor.

It localises to the cytoplasm. It catalyses the reaction a ribonucleoside 5'-phosphate + H2O = a ribonucleoside + phosphate. Its function is as follows. Nucleotidase that shows phosphatase activity on nucleoside 5'-monophosphates. The chain is 5'-nucleotidase SurE from Wolbachia pipientis subsp. Culex pipiens (strain wPip).